The sequence spans 206 residues: Ras-related protein Rab-18 (206 aa).

Position 1 is an N-acetylmethionine (methionine 1). 11 residues coordinate GTP: serine 17, glycine 20, lysine 21, serine 22, serine 23, aspartate 34, proline 35, threonine 40, glycine 66, lysine 123, and aspartate 125. Residue serine 22 coordinates Mg(2+). 2 consecutive short sequence motifs (switch) follow at residues 31-45 (DTFD…GVDF) and 63-80 (DTAG…YYRG). Residue threonine 40 coordinates Mg(2+). At serine 144 the chain carries Phosphoserine. Alanine 152 contributes to the GTP binding site. Cysteine 199 carries S-palmitoyl cysteine lipidation. Cysteine 203 is modified (cysteine methyl ester). Residue cysteine 203 is the site of S-geranylgeranyl cysteine attachment. Positions 204–206 (SVL) are cleaved as a propeptide — removed in mature form.

Belongs to the small GTPase superfamily. Rab family. Interacts (in GTP-bound form) with ZFYVE1. Interacts with ZW10 and this interaction is enhanced in the presence of ZFYVE1. Interacts with BSCL2. As to quaternary structure, (Microbial infection) Interacts with Hepatitis C virus (HCV) non-structural protein 5A; this interaction may promote the association of NS5A and other viral replicase components with lipid droplets. Requires Mg(2+) as cofactor. In terms of tissue distribution, ubiquitous.

Its subcellular location is the endoplasmic reticulum membrane. The protein localises to the golgi apparatus. It localises to the cis-Golgi network membrane. It is found in the lipid droplet. The protein resides in the apical cell membrane. It catalyses the reaction GTP + H2O = GDP + phosphate + H(+). Regulated by guanine nucleotide exchange factor (GEF) RAB3GAP1-RAB3GAP2 complex at the cis-Golgi membrane which promotes the exchange of bound GDP for free GTP. Regulated by GTPase activating protein (GAP) TBC1D20 at the ER membrane which increases the GTP hydrolysis activity. Inhibited by GDP dissociation inhibitors (GDIs) which prevent Rab-GDP dissociation. Functionally, the small GTPases Rab are key regulators of intracellular membrane trafficking, from the formation of transport vesicles to their fusion with membranes. Rabs cycle between an inactive GDP-bound form and an active GTP-bound form that is able to recruit to membranes different sets of downstream effectors directly responsible for vesicle formation, movement, tethering and fusion. RAB18 is required for the localization of ZFYVE1 to lipid droplets and for its function in mediating the formation of endoplasmic reticulum-lipid droplets (ER-LD) contacts. Also required for maintaining endoplasmic reticulum structure. Plays a role in apical endocytosis/recycling. Plays a key role in eye and brain development and neurodegeneration. In Homo sapiens (Human), this protein is Ras-related protein Rab-18.